The chain runs to 5154 residues: Hydrocephalus-inducing protein (5154 aa).

The tract at residues 409–800 (MILEDSVLDP…VLLSSPSPCG (392 aa)) is interaction with KIF9. The span at 997 to 1009 (RPKEKQSKKEPGK) shows a compositional bias: basic and acidic residues. Disordered regions lie at residues 997–1033 (RPKE…GNPV), 1966–1988 (ENEE…TSIS), 2193–2222 (ADSH…SPLL), 2383–2423 (KLQQ…QGAT), 2521–2572 (HTGT…KAER), and 2706–2762 (KAQE…DIDQ). Low complexity predominate over residues 1010 to 1024 (KGSTSSSRRQSKASQ). A coiled-coil region spans residues 1948 to 1977 (EMKKSKEEHMKAKYMENLENEEEEMNTSDQ). 2 stretches are compositionally biased toward polar residues: residues 1974 to 1988 (TSDQ…TSIS) and 2209 to 2220 (SETPQVQISSSP). A coiled-coil region spans residues 2308-2444 (YVVMKAQEKA…LKMESIERKV (137 aa)). Composition is skewed to basic and acidic residues over residues 2383–2398 (KLQQ…DELK), 2523–2535 (GTDE…DDQR), 2548–2572 (KDRE…KAER), and 2721–2734 (KLKD…ETQK). A coiled-coil region spans residues 2543–2588 (GRKGRKDRERERLEKERAEKERLEREKAERERLEKLKALEERSDVE).

Interacts with KIF9. As to expression, expressed in brain and testis. Expressed in ciliated epithelial cells lining bronchi and oviduct, and in spermatocytes.

The protein localises to the cell projection. It localises to the cilium. Its subcellular location is the cytoplasm. The protein resides in the cytoskeleton. It is found in the cilium axoneme. The protein localises to the flagellum. Functionally, required for ciliary motility. The chain is Hydrocephalus-inducing protein (Hydin) from Mus musculus (Mouse).